The primary structure comprises 82 residues: RNA-binding protein Hfq (82 aa).

The Sm domain occupies 10 to 70 (DIFLNGARKN…LSTITPSKAI (61 aa)).

It belongs to the Hfq family. Homohexamer.

Functionally, RNA chaperone that binds small regulatory RNA (sRNAs) and mRNAs to facilitate mRNA translational regulation in response to envelope stress, environmental stress and changes in metabolite concentrations. Also binds with high specificity to tRNAs. This is RNA-binding protein Hfq from Clostridium kluyveri (strain NBRC 12016).